We begin with the raw amino-acid sequence, 224 residues long: Deoxyribose-phosphate aldolase (224 aa).

D92 (proton donor/acceptor) is an active-site residue. Residue K154 is the Schiff-base intermediate with acetaldehyde of the active site. The active-site Proton donor/acceptor is the K183.

This sequence belongs to the DeoC/FbaB aldolase family. DeoC type 1 subfamily.

Its subcellular location is the cytoplasm. It carries out the reaction 2-deoxy-D-ribose 5-phosphate = D-glyceraldehyde 3-phosphate + acetaldehyde. The protein operates within carbohydrate degradation; 2-deoxy-D-ribose 1-phosphate degradation; D-glyceraldehyde 3-phosphate and acetaldehyde from 2-deoxy-alpha-D-ribose 1-phosphate: step 2/2. Functionally, catalyzes a reversible aldol reaction between acetaldehyde and D-glyceraldehyde 3-phosphate to generate 2-deoxy-D-ribose 5-phosphate. The sequence is that of Deoxyribose-phosphate aldolase from Mannheimia succiniciproducens (strain KCTC 0769BP / MBEL55E).